Here is a 209-residue protein sequence, read N- to C-terminus: Ephrin-A2 (209 aa).

A signal peptide spans 1–20 (MAPAQRPLLPLLLLLLPLRA). Positions 30–170 (ADRYAVYWNR…RLKVYVRPTN (141 aa)) constitute an Ephrin RBD domain. Residue asparagine 38 is glycosylated (N-linked (GlcNAc...) asparagine). Cystine bridges form between cysteine 69–cysteine 110 and cysteine 98–cysteine 159. Asparagine 170 and asparagine 184 each carry an N-linked (GlcNAc...) asparagine glycan. Residue asparagine 184 is the site of GPI-anchor amidated asparagine attachment. Residues 185–209 (SSCSGLGGCHLFLTTVPVLWSLLGS) constitute a propeptide, removed in mature form.

The protein belongs to the ephrin family. As to quaternary structure, binds to the receptor tyrosine kinases EPHA3, EPHA4 and EPHA5. Interacts with EPHA8; activates EPHA8. As to expression, expressed in myogenic progenitor cells.

The protein resides in the cell membrane. Its function is as follows. Cell surface GPI-bound ligand for Eph receptors, a family of receptor tyrosine kinases which are crucial for migration, repulsion and adhesion during neuronal, vascular and epithelial development. Binds promiscuously Eph receptors residing on adjacent cells, leading to contact-dependent bidirectional signaling into neighboring cells. The signaling pathway downstream of the receptor is referred to as forward signaling while the signaling pathway downstream of the ephrin ligand is referred to as reverse signaling. With the EPHA2 receptor may play a role in bone remodeling through regulation of osteoclastogenesis and osteoblastogenesis. The protein is Ephrin-A2 (Efna2) of Mus musculus (Mouse).